We begin with the raw amino-acid sequence, 315 residues long: Methionyl-tRNA formyltransferase (315 aa).

114-117 (SLLP) provides a ligand contact to (6S)-5,6,7,8-tetrahydrofolate.

It belongs to the Fmt family.

It carries out the reaction L-methionyl-tRNA(fMet) + (6R)-10-formyltetrahydrofolate = N-formyl-L-methionyl-tRNA(fMet) + (6S)-5,6,7,8-tetrahydrofolate + H(+). Attaches a formyl group to the free amino group of methionyl-tRNA(fMet). The formyl group appears to play a dual role in the initiator identity of N-formylmethionyl-tRNA by promoting its recognition by IF2 and preventing the misappropriation of this tRNA by the elongation apparatus. This Corynebacterium efficiens (strain DSM 44549 / YS-314 / AJ 12310 / JCM 11189 / NBRC 100395) protein is Methionyl-tRNA formyltransferase.